A 310-amino-acid polypeptide reads, in one-letter code: MKFTVERDILTDAVSWAARSLSPRPPVPVLSGLLITAEAGVVSIASFDYETSARLEIEADVETAGQVLVSGRLLNDIVRSLPQAQVTVELDGGKVLVTCRSSRFSLATMPVGDYPALPELPAPAGTVDGAAFAHAVAQVTVAASKDDTLPILTAVKVEIEGDTITFLATDRYRLAMKEIRWTPADPSISTSLLIKARTLTEVAKSLGSGGDLEILLGQTADLVGFASGGRRTTSVLVDGEYPKIRSLFPESSPIQAVVDTAALVEASRRVALVAERNTALRMVFTEGQVTLDAGTGDDASANESVPCTLE.

It belongs to the beta sliding clamp family. As to quaternary structure, forms a ring-shaped head-to-tail homodimer around DNA which binds and tethers DNA polymerases and other proteins to the DNA. The DNA replisome complex has a single clamp-loading complex (3 tau and 1 each of delta, delta', psi and chi subunits) which binds 3 Pol III cores (1 core on the leading strand and 2 on the lagging strand) each with a beta sliding clamp dimer. Additional proteins in the replisome are other copies of gamma, psi and chi, Ssb, DNA helicase and RNA primase.

Its subcellular location is the cytoplasm. In terms of biological role, confers DNA tethering and processivity to DNA polymerases and other proteins. Acts as a clamp, forming a ring around DNA (a reaction catalyzed by the clamp-loading complex) which diffuses in an ATP-independent manner freely and bidirectionally along dsDNA. Initially characterized for its ability to contact the catalytic subunit of DNA polymerase III (Pol III), a complex, multichain enzyme responsible for most of the replicative synthesis in bacteria; Pol III exhibits 3'-5' exonuclease proofreading activity. The beta chain is required for initiation of replication as well as for processivity of DNA replication. This chain is Beta sliding clamp (dnaN), found in Micrococcus luteus (Micrococcus lysodeikticus).